We begin with the raw amino-acid sequence, 470 residues long: Cholesterol 7-desaturase nvd 1 (470 aa).

The helical transmembrane segment at 67–87 threads the bilayer; sequence LALCIAGFSVLMYFLYVLVFV. Residues 136-238 enclose the Rieske domain; that stretch reads FRLVDSQQLE…CREVNKAIFV (103 aa). [2Fe-2S] cluster-binding residues include Cys-176, His-178, Cys-196, and His-199.

The protein belongs to the cholesterol 7-desaturase family. It depends on [2Fe-2S] cluster as a cofactor.

It is found in the membrane. It catalyses the reaction cholesterol + NADPH + O2 + H(+) = 7-dehydrocholesterol + NADP(+) + 2 H2O. The catalysed reaction is cholesterol + NADH + O2 + H(+) = 7-dehydrocholesterol + NAD(+) + 2 H2O. It functions in the pathway steroid hormone biosynthesis; dafachronic acid biosynthesis. Functionally, catalyzes the production of 7-dehydrocholesterol (7-DHC or cholesta-5,7-dien-3beta-ol) by inserting a double bond (desaturating) at the C7-C8 single bond of cholesterol. Essential regulator of steroid biosynthesis as this reaction is the first step in the synthesis of the steroid hormone Delta(7)-dafachronic acid. The protein is Cholesterol 7-desaturase nvd 1 of Ciona intestinalis (Transparent sea squirt).